The primary structure comprises 425 residues: Putative E3 ubiquitin-protein ligase UBR7 (425 aa).

The segment at 44 to 116 (EKCSYSQGSV…KNLECKLLPD (73 aa)) adopts a UBR-type zinc-finger fold. The PHD-type; atypical zinc finger occupies 132 to 188 (GLYCICKRPYPDPEDEIPDEMIQCVVCEDWFHGRHLGAIPPESGDFQEMVCQACMKR). Glycyl lysine isopeptide (Lys-Gly) (interchain with G-Cter in SUMO2) cross-links involve residues Lys-225 and Lys-252. The segment at 225-246 (KPENGEHQDSTLKEDVPEQGKD) is disordered. Phosphoserine is present on Ser-264. A Glycyl lysine isopeptide (Lys-Gly) (interchain with G-Cter in SUMO2) cross-link involves residue Lys-274. Ser-354 is modified (phosphoserine). A Glycyl lysine isopeptide (Lys-Gly) (interchain with G-Cter in SUMO2) cross-link involves residue Lys-398.

In terms of tissue distribution, expressed in sperm (at protein level).

The catalysed reaction is S-ubiquitinyl-[E2 ubiquitin-conjugating enzyme]-L-cysteine + [acceptor protein]-L-lysine = [E2 ubiquitin-conjugating enzyme]-L-cysteine + N(6)-ubiquitinyl-[acceptor protein]-L-lysine.. Its pathway is protein modification; protein ubiquitination. Its function is as follows. E3 ubiquitin-protein ligase which is a component of the N-end rule pathway. Recognizes and binds to proteins bearing specific N-terminal residues that are destabilizing according to the N-end rule, leading to their ubiquitination and subsequent degradation. In Homo sapiens (Human), this protein is Putative E3 ubiquitin-protein ligase UBR7 (UBR7).